The primary structure comprises 251 residues: MKKLIAANWKMYKTIDEARATGRELVSAVAGSLPADREVLVCPPFTALHALHDTFKDVEGFAIGGQDVYPATEGAYTGEIAPGMLLDAGCGWVLTGHSERRHILGEDDETVARKTAFSLKAGLRVVLCIGEKLDEREAGRLEDVLAHQLQVGLADVDATYVPQSLVVAYEPVWAIGTGKVAGPAEVVEAHALVRSLLEARYGRDGAAIRILYGGSVKPDNAAELLSLDNVDGLLVGGASLQAVSFSRIILA.

8–10 (NWK) serves as a coordination point for substrate. Histidine 97 (electrophile) is an active-site residue. Catalysis depends on glutamate 170, which acts as the Proton acceptor. Substrate-binding positions include glycine 176, serine 215, and 236–237 (GG).

It belongs to the triosephosphate isomerase family. In terms of assembly, homodimer.

The protein resides in the cytoplasm. The enzyme catalyses D-glyceraldehyde 3-phosphate = dihydroxyacetone phosphate. It participates in carbohydrate biosynthesis; gluconeogenesis. Its pathway is carbohydrate degradation; glycolysis; D-glyceraldehyde 3-phosphate from glycerone phosphate: step 1/1. Involved in the gluconeogenesis. Catalyzes stereospecifically the conversion of dihydroxyacetone phosphate (DHAP) to D-glyceraldehyde-3-phosphate (G3P). The polypeptide is Triosephosphate isomerase (Nitratidesulfovibrio vulgaris (strain ATCC 29579 / DSM 644 / CCUG 34227 / NCIMB 8303 / VKM B-1760 / Hildenborough) (Desulfovibrio vulgaris)).